The sequence spans 251 residues: Protein phosphatase 1 regulatory subunit 35 (251 aa).

Disordered regions lie at residues 58 to 99 (LITV…QQTH) and 180 to 235 (PALA…VPRP). Over residues 76-99 (PNKDEHGVETDREQSRECDGQQTH) the composition is skewed to basic and acidic residues.

Belongs to the PPP1R35 family.

The protein resides in the cytoplasm. It is found in the cytoskeleton. The protein localises to the microtubule organizing center. It localises to the centrosome. Its subcellular location is the centriole. Its function is as follows. During centriole duplication, may play a role in the centriole elongation by promoting the recruitment of the microtubule-binding elongation machinery, leading to the centriole to centrosome conversion. In addition may play a role in the primary cilia assembly. This Danio rerio (Zebrafish) protein is Protein phosphatase 1 regulatory subunit 35.